Here is a 62-residue protein sequence, read N- to C-terminus: Sperm protamine P1 (62 aa).

The segment at 1–62 is disordered; sequence MARYRRHSRS…RRYSRRGRRR (62 aa).

This sequence belongs to the protamine P1 family. In terms of tissue distribution, testis.

The protein resides in the nucleus. Its subcellular location is the chromosome. Its function is as follows. Protamines substitute for histones in the chromatin of sperm during the haploid phase of spermatogenesis. They compact sperm DNA into a highly condensed, stable and inactive complex. The polypeptide is Sperm protamine P1 (PRM1) (Pseudantechinus bilarni (Sandstone dibbler)).